Reading from the N-terminus, the 1136-residue chain is Solute carrier family 12 member 2 (1136 aa).

Disordered stretches follow at residues 1 to 73 and 91 to 121; these read MSAS…SVSG and PDAA…QQHH. The Cytoplasmic portion of the chain corresponds to 1 to 208; that stretch reads MSASPPISAG…SESKGVVKFG (208 aa). Phosphothreonine occurs at positions 125, 129, 134, 139, and 152. The discontinuously helical transmembrane segment at 209 to 234 threads the bilayer; sequence WIKGVLVRCMLNIWGVMLFIRMTWIV. Na(+) is bound at residue Leu-219. Residues Asn-220 and Ile-221 each coordinate K(+). Trp-222 provides a ligand contact to Na(+). Chloride contacts are provided by Gly-223, Val-224, and Met-225. Topologically, residues 235-238 are extracellular; it reads GQAG. A helical membrane pass occupies residues 239–261; that stretch reads IAYSCIIVIMATVVTTITGCSTS. At 262-285 the chain is on the cytoplasmic side; that stretch reads AIATNGFVRGGGAYYLISRSLGPE. Residues 286–314 form a helical membrane-spanning segment; sequence FGGSIGLIFAFANAVAVAMYVVGFAETVV. Residue Phe-294 coordinates chloride. Tyr-305 contacts K(+). Topologically, residues 315–327 are extracellular; sequence ELLMDSGLLMIDQ. The next 2 membrane-spanning stretches (helical) occupy residues 328-351 and 352-376; these read TNDI…AGME and WEAK…IGSF. At 377 to 407 the chain is on the extracellular side; that stretch reads IAVDSKKKFGFFSYDAGILAENFGPDFRGQT. The chain crosses the membrane as a discontinuously helical span at residues 408–427; the sequence is FFSVFSIFFPAATGILAGAN. K(+) is bound by residues Pro-417, Ala-418, and Thr-420. Pro-417 and Ala-418 together coordinate chloride. The chloride site is built by Gly-421 and Ile-422. Residues 428–438 lie on the Cytoplasmic side of the membrane; it reads ISGDLADPQMA. A helical membrane pass occupies residues 439–462; sequence IPKGTLLAILITGLVYVGVAISAG. Topologically, residues 463–523 are extracellular; sequence ACIVRDATGI…DFQVMSVVSG (61 aa). 2 N-linked (GlcNAc...) asparagine glycosylation sites follow: Asn-475 and Asn-481. The cysteines at positions 496 and 507 are disulfide-linked. The helical transmembrane segment at 524–551 threads the bilayer; sequence FSPLISAGIFSATLSSALASLVSAPKVF. Residues Ala-535, Ser-538, and Ser-539 each contribute to the Na(+) site. Topologically, residues 552–576 are cytoplasmic; that stretch reads QALCKDNIYPGIAIFGKGYGKNNEP. 2 consecutive transmembrane segments (helical) span residues 577–595 and 596–619; these read LRGY…LIAE and LNVI…FSVF. 2 residues coordinate chloride: Phe-607 and Tyr-611. Residues 620-636 are Cytoplasmic-facing; it reads HASLANSPGWRPSFKYY. 2 consecutive transmembrane segments (helical) span residues 637-656 and 657-672; these read NMWA…FIIN and WWAA…SLYI. At 673-1136 the chain is on the cytoplasmic side; sequence YVSYKKPDVN…NHQSVLTFYS (464 aa). Positions 689–702 are scissor helix; sequence ALTYHQALTHSLQL. A disordered region spans residues 875-921; that stretch reads SKDSDGDSSKPSSKATSVQNSPAVQKDEDDDGKAHTQPLLKKDKKSP. Phosphothreonine is present on Thr-1059.

It belongs to the SLC12A transporter family. As to quaternary structure, homodimer; adopts a domain-swap conformation at the scissor helices connecting the transmembrane domain and C-terminal domain. In terms of processing, phosphorylated at Thr-125, Thr-129 and Thr-134 by OXSR1/OSR1 and STK39/SPAK downstream of WNK kinases (WNK1, WNK2, WNK3 or WNK4), promoting its activity.

It is found in the basolateral cell membrane. It carries out the reaction K(+)(out) + 2 chloride(out) + Na(+)(out) = K(+)(in) + 2 chloride(in) + Na(+)(in). Activated following phosphorylation by OXSR1/OSR1 and STK39/SPAK. Inhibited by bumetanide. In terms of biological role, cation-chloride cotransporter which mediates the electroneutral transport of chloride, potassium and/or sodium ions across the membrane. Plays a vital role in the regulation of ionic balance and cell volume. Important for maintenance of endolymph volume in the otic vesicle, probably by regulating ion homeostasis. Also plays a role in normal development of the swim bladder. The chain is Solute carrier family 12 member 2 from Danio rerio (Zebrafish).